An 893-amino-acid polypeptide reads, in one-letter code: Protein bride of sevenless (893 aa).

A signal peptide spans M1–H30. The Extracellular segment spans residues V32–T530. 2 disordered regions span residues T36–S66 and G82–T102. Residues Q50–S66 are compositionally biased toward polar residues. N-linked (GlcNAc...) asparagine glycans are attached at residues N183, N307, N328, N471, and N482. 8 consecutive transmembrane segments (helical) span residues G531–V551, P563–F583, L607–L627, A630–I650, I653–M673, W692–I712, G722–L742, and A752–P772. Topologically, residues R773–F893 are cytoplasmic. The segment at A858 to F893 is disordered.

The protein belongs to the G-protein coupled receptor 3 family.

It is found in the cell membrane. Acts as a ligand for sevenless tyrosine-kinase receptor during eye development. The sequence is that of Protein bride of sevenless (boss) from Drosophila virilis (Fruit fly).